The chain runs to 119 residues: V-type proton ATPase subunit F (119 aa).

The protein belongs to the V-ATPase F subunit family. V-ATPase is a heteromultimeric enzyme made up of two complexes: the ATP-hydrolytic V1 complex and the proton translocation V0 complex. The V1 complex consists of three catalytic AB heterodimers that form a heterohexamer, three peripheral stalks each consisting of EG heterodimers, one central rotor including subunits D and F, and the regulatory subunits C and H. The proton translocation complex V0 consists of the proton transport subunit a, a ring of proteolipid subunits c9c'', rotary subunit d, subunits e and f, and the accessory subunits ATP6AP1/Ac45 and ATP6AP2/PRR.

It localises to the cytoplasmic vesicle. Its subcellular location is the secretory vesicle. The protein resides in the synaptic vesicle membrane. It is found in the clathrin-coated vesicle membrane. Functionally, subunit of the V1 complex of vacuolar(H+)-ATPase (V-ATPase), a multisubunit enzyme composed of a peripheral complex (V1) that hydrolyzes ATP and a membrane integral complex (V0) that translocates protons. V-ATPase is responsible for acidifying and maintaining the pH of intracellular compartments and in some cell types, is targeted to the plasma membrane, where it is responsible for acidifying the extracellular environment. The sequence is that of V-type proton ATPase subunit F (Atp6v1f) from Mus musculus (Mouse).